The chain runs to 408 residues: Argininosuccinate synthase (408 aa).

Residues 10–18 and Ala-37 contribute to the ATP site; that span reads AYSGGLDTS. 2 residues coordinate L-citrulline: Tyr-90 and Ser-95. An ATP-binding site is contributed by Gly-120. Residues Thr-122, Asn-126, and Asp-127 each contribute to the L-aspartate site. Asn-126 serves as a coordination point for L-citrulline. The L-citrulline site is built by Arg-130, Ser-181, Ser-190, Glu-266, and Tyr-278.

Belongs to the argininosuccinate synthase family. Type 1 subfamily. As to quaternary structure, homotetramer.

The protein resides in the cytoplasm. The enzyme catalyses L-citrulline + L-aspartate + ATP = 2-(N(omega)-L-arginino)succinate + AMP + diphosphate + H(+). The protein operates within amino-acid biosynthesis; L-arginine biosynthesis; L-arginine from L-ornithine and carbamoyl phosphate: step 2/3. This chain is Argininosuccinate synthase, found in Laribacter hongkongensis (strain HLHK9).